Reading from the N-terminus, the 336-residue chain is Glucokinase (336 aa).

12–17 (ADIGGT) serves as a coordination point for ATP.

Belongs to the bacterial glucokinase family.

Its subcellular location is the cytoplasm. It carries out the reaction D-glucose + ATP = D-glucose 6-phosphate + ADP + H(+). This is Glucokinase from Helicobacter acinonychis (strain Sheeba).